Here is a 134-residue protein sequence, read N- to C-terminus: Translation initiation factor 2 subunit beta (134 aa).

This sequence belongs to the eIF-2-beta/eIF-5 family. As to quaternary structure, heterotrimer composed of an alpha, a beta and a gamma chain.

In terms of biological role, eIF-2 functions in the early steps of protein synthesis by forming a ternary complex with GTP and initiator tRNA. This Pyrobaculum aerophilum (strain ATCC 51768 / DSM 7523 / JCM 9630 / CIP 104966 / NBRC 100827 / IM2) protein is Translation initiation factor 2 subunit beta.